A 415-amino-acid polypeptide reads, in one-letter code: T-cell-specific guanine nucleotide triphosphate-binding protein 1 (415 aa).

The 183-residue stretch at 55-237 (APLHIAVTGE…PKLETKLLQD (183 aa)) folds into the IRG-type G domain. Residues glycine 66, glycine 68, lysine 69, and serine 70 each coordinate GDP. Residue threonine 89 is modified to (Microbial infection) Phosphothreonine; by ROP17. The GDP site is built by glycine 90, lysine 171, aspartate 173, and asparagine 219.

The protein belongs to the TRAFAC class dynamin-like GTPase superfamily. IRG family. In terms of assembly, monomer, homodimer or homotetramer in the presence of GTP. Forms higher order homooligomers in GTP-dependent manner. As to quaternary structure, (Microbial infection) Interacts with Toxoplasma gondii ROP18. Post-translationally, (Microbial infection) Phosphorylated by Toxoplasma gondii ROP17; the phosphorylation leads to disassembly of IRGB6 (TGTP1/TGTP2) polymers into monomers and dimers. Phosphorylated by Toxoplasma gondii ROP18. Expressed in thymus and lymph nodes, predominantly T-cells. Not expressed by immature CD4(+) CD8(+) thymocytes (at protein level). Expressed in IFNG-stimulated macrophages. Expressed at low levels in unstimulated astrocytes. Due to sequence similarity with Tgtp2, it is impossible to assign unambiguously experimental data published in the literature to Tgtp1 or Tgtp2 gene.

Its subcellular location is the cytoplasm. It is found in the endoplasmic reticulum. The protein resides in the golgi apparatus. The protein localises to the parasitophorous vacuole membrane. It carries out the reaction GTP + H2O = GDP + phosphate + H(+). Involved in innate cell-autonomous resistance to intracellular pathogens, such as Toxoplasma gondii. During avirulent type II T.gondii infection, recruited to the parasitophorous vacuole (PV) membrane, leading to PV vesiculation and rupture, and subsequent digestion of the parasite within the cytosol. Not recruited to virulent type I T.gondii PV membrane. May confer an antiviral state for vesicular stomatitis virus. The protein is T-cell-specific guanine nucleotide triphosphate-binding protein 1 (Tgtp1) of Mus musculus (Mouse).